Here is a 141-residue protein sequence, read N- to C-terminus: Hemoglobin subunit alpha-2 (141 aa).

Ser1 is modified (N-acetylserine). The Globin domain maps to 1 to 141 (SLSTKDKETV…LARALSEKYR (141 aa)). His59 provides a ligand contact to O2. Residue His88 participates in heme b binding.

The protein belongs to the globin family. As to quaternary structure, hb2 is a heterotetramer of two alpha-2 chains and two beta chains. As to expression, red blood cells.

Its function is as follows. Involved in oxygen transport from gills to the various peripheral tissues. The sequence is that of Hemoglobin subunit alpha-2 (hba2) from Notothenia angustata (Rockcod).